Consider the following 564-residue polypeptide: Probable metalloprotease ARX1 (564 aa).

The protein belongs to the peptidase M24 family. In terms of assembly, component of the nucleoplasmic and cytoplasmic pre-60S ribosomal particles.

It localises to the cytoplasm. It is found in the nucleus. In terms of biological role, probable metalloprotease involved in proper assembly of pre-ribosomal particles during the biogenesis of the 60S ribosomal subunit. Accompanies the pre-60S particles to the cytoplasm. The chain is Probable metalloprotease ARX1 (ARX1) from Candida albicans (strain SC5314 / ATCC MYA-2876) (Yeast).